A 168-amino-acid chain; its full sequence is Ubiquitin-conjugating enzyme E2 2 (168 aa).

The region spanning 4–150 is the UBC core domain; that stretch reads PAKRRLMRDF…VRETVENSWN (147 aa). Cys88 functions as the Glycyl thioester intermediate in the catalytic mechanism. Positions 143 to 168 are disordered; the sequence is ETVENSWNEDDEDEDEDEDEDIDDAE. Acidic residues predominate over residues 149-168; sequence WNEDDEDEDEDEDEDIDDAE.

The protein belongs to the ubiquitin-conjugating enzyme family.

It is found in the cytoplasm. The protein resides in the nucleus. The catalysed reaction is S-ubiquitinyl-[E1 ubiquitin-activating enzyme]-L-cysteine + [E2 ubiquitin-conjugating enzyme]-L-cysteine = [E1 ubiquitin-activating enzyme]-L-cysteine + S-ubiquitinyl-[E2 ubiquitin-conjugating enzyme]-L-cysteine.. It participates in protein modification; protein ubiquitination. Its function is as follows. Catalyzes the covalent attachment of ubiquitin to other proteins. Plays a role in transcription regulation by catalyzing the monoubiquitination of histone H2B to form H2BK123ub1. H2BK123ub1 gives a specific tag for epigenetic transcriptional activation and is also a prerequisite for H3K4me and H3K79me formation. Also involved in postreplication repair of UV-damaged DNA, in N-end rule-dependent protein degradation and in sporulation. The polypeptide is Ubiquitin-conjugating enzyme E2 2 (UBC2) (Debaryomyces hansenii (strain ATCC 36239 / CBS 767 / BCRC 21394 / JCM 1990 / NBRC 0083 / IGC 2968) (Yeast)).